The following is a 148-amino-acid chain: Lysozyme C (148 aa).

The signal sequence occupies residues 1 to 18 (MKALIILGLVLLSVTVQG). Residues 19-148 (KIFERCELAR…VSQYVEGCGV (130 aa)) form the C-type lysozyme domain. Cystine bridges form between Cys24–Cys146, Cys48–Cys134, Cys83–Cys99, and Cys95–Cys113. Active-site residues include Glu53 and Asp71.

This sequence belongs to the glycosyl hydrolase 22 family. Monomer.

It carries out the reaction Hydrolysis of (1-&gt;4)-beta-linkages between N-acetylmuramic acid and N-acetyl-D-glucosamine residues in a peptidoglycan and between N-acetyl-D-glucosamine residues in chitodextrins.. Its function is as follows. Lysozymes have primarily a bacteriolytic function; those in tissues and body fluids are associated with the monocyte-macrophage system and enhance the activity of immunoagents. The polypeptide is Lysozyme C (LYZ) (Colobus angolensis (Angolan colobus)).